The sequence spans 32 residues: NLLQFRKMIKKMTGKEVVWYAFYGCYCGGGGK.

Ca(2+) contacts are provided by Tyr-26, Gly-28, and Gly-30.

It belongs to the phospholipase A2 family. Group II subfamily. It depends on Ca(2+) as a cofactor. In terms of tissue distribution, expressed by the venom gland.

It localises to the secreted. It carries out the reaction a 1,2-diacyl-sn-glycero-3-phosphocholine + H2O = a 1-acyl-sn-glycero-3-phosphocholine + a fatty acid + H(+). Snake venom phospholipase A2 (PLA2) that inhibits neuromuscular transmission by blocking acetylcholine release from the nerve termini. PLA2 catalyzes the calcium-dependent hydrolysis of the 2-acyl groups in 3-sn-phosphoglycerides. The sequence is that of Basic phospholipase A2 from Gloydius halys (Chinese water mocassin).